The primary structure comprises 783 residues: uncharacterized protein (783 aa).

A DNA-binding region (zn(2)-C6 fungal-type) is located at residues 40–66; sequence CFNCKARKVRCDGANPCKACASNNLEC.

It localises to the cytoplasm. The protein resides in the nucleus. This is an uncharacterized protein from Schizosaccharomyces pombe (strain 972 / ATCC 24843) (Fission yeast).